A 153-amino-acid chain; its full sequence is MGVLDHVSEYFDCSHGSSKRHKSLQTVDVRVLIDCEGCERKVRRALEGMRGIRDVTIEPNAQKVTVVGYVEPNKVVARIIHRTGKRAELYPFVPYDVVAHPYASGVYDNRAPTGYVRNTEYDPHVSRLARASSTEVRYTTAFSDENASACVVM.

Residues 24-88 (LQTVDVRVLI…IIHRTGKRAE (65 aa)) form the HMA domain. Positions 35 and 38 each coordinate a metal cation. C150 is subject to Cysteine methyl ester. C150 carries S-farnesyl cysteine lipidation. A propeptide spans 151–153 (VVM) (removed in mature form).

Belongs to the HIPP family. As to expression, expressed in roots, shoot apical meristem, trichomes and flower buds.

It localises to the membrane. Its function is as follows. Heavy-metal-binding protein. Binds cadmium. May be involved in cadmium transport and play a role in cadmium detoxification. The polypeptide is Heavy metal-associated isoprenylated plant protein 25 (Arabidopsis thaliana (Mouse-ear cress)).